Reading from the N-terminus, the 106-residue chain is UPF0145 protein APJL_0492 (106 aa).

The protein belongs to the UPF0145 family.

The protein is UPF0145 protein APJL_0492 of Actinobacillus pleuropneumoniae serotype 3 (strain JL03).